A 321-amino-acid chain; its full sequence is MNSTLDSSPAPGLTISPTMDLVTWIYFSVTFLAMATCVGGMAGNSLVIWLLSCNGMQRSPFCVYVLNLAVADFLFLFCMASMLSLETGPLLIVNISAKIYEGMRRIKYFAYTAGLSLLTAISTQRCLSVLFPIWYKCHRPRHLSSVVSGALWALAFLMNFLASFFCVQFWHPNKHQCFKVDIVFNSLILGIFMPVMILTSTILFIRVRKNSLMQRRRPRRLYVVILTSILVFLTCSLPLGINWFLLYWVDVKRDVRLLYSCVSRFSSSLSSSANPVIYFLVGSQKSHRLQESLGAVLGRALRDEPEPEGRETPSTCTNDGV.

The Extracellular portion of the chain corresponds to 1–8 (MNSTLDSS). The N-linked (GlcNAc...) asparagine glycan is linked to asparagine 2. The helical transmembrane segment at 9–29 (PAPGLTISPTMDLVTWIYFSV) threads the bilayer. A topological domain (cytoplasmic) is located at residue threonine 30. A helical membrane pass occupies residues 31–51 (FLAMATCVGGMAGNSLVIWLL). At 52-72 (SCNGMQRSPFCVYVLNLAVAD) the chain is on the extracellular side. Residues 73–93 (FLFLFCMASMLSLETGPLLIV) traverse the membrane as a helical segment. The Cytoplasmic portion of the chain corresponds to 94–146 (NISAKIYEGMRRIKYFAYTAGLSLLTAISTQRCLSVLFPIWYKCHRPRHLSSV). The helical transmembrane segment at 147–167 (VSGALWALAFLMNFLASFFCV) threads the bilayer. At 168-181 (QFWHPNKHQCFKVD) the chain is on the extracellular side. A helical transmembrane segment spans residues 182–202 (IVFNSLILGIFMPVMILTSTI). The Cytoplasmic portion of the chain corresponds to 203 to 220 (LFIRVRKNSLMQRRRPRR). A helical transmembrane segment spans residues 221–241 (LYVVILTSILVFLTCSLPLGI). The Extracellular segment spans residues 242–260 (NWFLLYWVDVKRDVRLLYS). Residues 261–281 (CVSRFSSSLSSSANPVIYFLV) traverse the membrane as a helical segment. The Cytoplasmic segment spans residues 282–321 (GSQKSHRLQESLGAVLGRALRDEPEPEGRETPSTCTNDGV). The span at 302-311 (RDEPEPEGRE) shows a compositional bias: basic and acidic residues. The segment at 302-321 (RDEPEPEGRETPSTCTNDGV) is disordered. Positions 312–321 (TPSTCTNDGV) are enriched in polar residues.

It belongs to the G-protein coupled receptor 1 family. Mas subfamily. Expressed in a subset of sensory neurons that includes nociceptors. Expressed in the subclass of non-peptidergic sensory neurons that are IB4(+) and VR1(-).

It is found in the cell membrane. In terms of biological role, may regulate nociceptor function and/or development, including the sensation or modulation of pain. Functions as a specific membrane receptor for beta-alanine. The receptor couples with G-protein G(q) and G(i). The protein is Mas-related G-protein coupled receptor member D (Mrgprd) of Mus musculus (Mouse).